The primary structure comprises 338 residues: L-serine dehydratase (338 aa).

K39 carries the post-translational modification N6-(pyridoxal phosphate)lysine.

The protein belongs to the serine/threonine dehydratase family. Pyridoxal 5'-phosphate serves as cofactor.

It localises to the cytoplasm. The enzyme catalyses L-serine = pyruvate + NH4(+). It functions in the pathway carbohydrate biosynthesis; gluconeogenesis. The protein is L-serine dehydratase (SDL1) of Saccharomyces cerevisiae (strain RM11-1a) (Baker's yeast).